The primary structure comprises 457 residues: Paired box protein Pax-8 (457 aa).

The paired DNA-binding region spans 9–135; it reads GHGGLNQLGG…SSINRIIRTK (127 aa). A PAI subdomain region spans residues 12 to 68; it reads GLNQLGGAFVNGRPLPEVVRQRIVDLAHQGVRPCDISRQLRVSHGCVSKILGRYYET. Residues 87–135 form an RED subdomain region; the sequence is KVVEKIGDYKRQNPTMFAWEIRDRLLAEGVCDNDTVPSVSSINRIIRTK. The segment covering 159–182 has biased composition (polar residues); that stretch reads LIPSSAVTPPESPQSDSLGSTYSI. The disordered stretch occupies residues 159–226; that stretch reads LIPSSAVTPP…SSGPRKHLRT (68 aa). Ser-304 bears the Phosphoserine mark.

Interacts with WWTR1.

The protein localises to the nucleus. In terms of biological role, thought to encode a transcription factor. It may have a role in kidney cell differentiation. May play a regulatory role in mammalian development. The sequence is that of Paired box protein Pax-8 (Pax8) from Rattus norvegicus (Rat).